Consider the following 723-residue polypeptide: Polyribonucleotide nucleotidyltransferase (723 aa).

Mg(2+)-binding residues include aspartate 488 and aspartate 494. The KH domain maps to 555 to 614; sequence PRMITMKIHPDKIREVIGKGGSTIQALTKETGTTIDIQEDGTITIASTSTEGMAEAKRRI. An S1 motif domain is found at 624-692; the sequence is GKIYAGTVLK…EKGRLRLSLK (69 aa). The interval 701-723 is disordered; the sequence is SISPINAGESAAPAAPAGGSEQQ. Positions 707-723 are enriched in low complexity; the sequence is AGESAAPAAPAGGSEQQ.

This sequence belongs to the polyribonucleotide nucleotidyltransferase family. Requires Mg(2+) as cofactor.

It localises to the cytoplasm. The catalysed reaction is RNA(n+1) + phosphate = RNA(n) + a ribonucleoside 5'-diphosphate. Functionally, involved in mRNA degradation. Catalyzes the phosphorolysis of single-stranded polyribonucleotides processively in the 3'- to 5'-direction. This chain is Polyribonucleotide nucleotidyltransferase, found in Cupriavidus taiwanensis (strain DSM 17343 / BCRC 17206 / CCUG 44338 / CIP 107171 / LMG 19424 / R1) (Ralstonia taiwanensis (strain LMG 19424)).